The following is an 882-amino-acid chain: Translation initiation factor IF-2 (882 aa).

Residues 50 to 299 are disordered; sequence SFKSANTTKP…KERPLPETLV (250 aa). 2 stretches are compositionally biased toward basic and acidic residues: residues 60–71 and 84–96; these read STEKDSKNSSRK and RRRD…DNRH. Residues 97–108 show a composition bias toward basic residues; it reads GNNKRRNNKFKK. 4 stretches are compositionally biased toward basic and acidic residues: residues 109–133, 169–183, 232–242, and 250–263; these read QQND…DLLN, KKVE…EKLE, QKEETKPTRKK, and EVPD…EHSD. Residues 264–277 show a composition bias toward basic residues; sequence KARRRRNKKNKRIN. The segment covering 278–294 has biased composition (basic and acidic residues); that stretch reads QSKEIKKQPTQRKERPL. The tr-type G domain occupies 383–552; that stretch reads KRPPVVTIMG…LLQADVMELK (170 aa). The interval 392–399 is G1; the sequence is GHVDHGKT. 392-399 contacts GTP; that stretch reads GHVDHGKT. Residues 417 to 421 are G2; that stretch reads GITQK. A G3 region spans residues 438–441; the sequence is DTPG. GTP-binding positions include 438–442 and 492–495; these read DTPGH and NKID. The G4 stretch occupies residues 492–495; it reads NKID. The G5 stretch occupies residues 528 to 530; the sequence is SAK.

The protein belongs to the TRAFAC class translation factor GTPase superfamily. Classic translation factor GTPase family. IF-2 subfamily.

It is found in the cytoplasm. One of the essential components for the initiation of protein synthesis. Protects formylmethionyl-tRNA from spontaneous hydrolysis and promotes its binding to the 30S ribosomal subunits. Also involved in the hydrolysis of GTP during the formation of the 70S ribosomal complex. The protein is Translation initiation factor IF-2 of Lactobacillus gasseri (strain ATCC 33323 / DSM 20243 / BCRC 14619 / CIP 102991 / JCM 1131 / KCTC 3163 / NCIMB 11718 / NCTC 13722 / AM63).